Reading from the N-terminus, the 335-residue chain is 3-hydroxyisobutyrate dehydrogenase, mitochondrial (335 aa).

The transit peptide at 1-35 (MAASLGFRGAASGLRYWSGRRRPVGSLAAVCSRSM) directs the protein to the mitochondrion. 39–68 (TPVGFIGLGNMGNPMAKNLIKHGYPLILYD) lines the NAD(+) pocket. 2 positions are modified to N6-acetyllysine; alternate: K59 and K75. An N6-succinyllysine; alternate mark is found at K59 and K75. K94 is modified (N6-succinyllysine). NAD(+) contacts are provided by residues 102-103 (LP) and N107. At K120 the chain carries N6-acetyllysine. NAD(+) is bound at residue T133. K140 carries the N6-succinyllysine modification. K144 carries the post-translational modification N6-acetyllysine. K148 carries the post-translational modification N6-acetyllysine; alternate. Residue K148 is modified to N6-succinyllysine; alternate. Residue K208 is part of the active site. Residues K237 and K241 each carry the N6-acetyllysine; alternate modification. 2 positions are modified to N6-succinyllysine; alternate: K237 and K241. K283 contacts NAD(+). An N6-succinyllysine modification is found at K296. K320 bears the N6-acetyllysine; alternate mark. K320 bears the N6-succinyllysine; alternate mark.

Belongs to the HIBADH-related family. 3-hydroxyisobutyrate dehydrogenase subfamily. Homodimer. In terms of tissue distribution, higher level in kidney, liver, and heart than in muscle.

The protein localises to the mitochondrion. The enzyme catalyses 3-hydroxy-2-methylpropanoate + NAD(+) = 2-methyl-3-oxopropanoate + NADH + H(+). It participates in amino-acid degradation; L-valine degradation. This chain is 3-hydroxyisobutyrate dehydrogenase, mitochondrial (Hibadh), found in Rattus norvegicus (Rat).